Consider the following 255-residue polypeptide: Flap endonuclease Xni (255 aa).

Asp105 contributes to the Mg(2+) binding site. Residues 162–254 (EHKQFIDYLA…LKQFRLPKAN (93 aa)) enclose the 5'-3' exonuclease domain. Leu172, Ala173, Pro181, Val183, and Ile186 together coordinate K(+). The segment at 185–190 (GIGPKS) is interaction with DNA.

The protein belongs to the Xni family. Requires Mg(2+) as cofactor. K(+) is required as a cofactor.

Has flap endonuclease activity. During DNA replication, flap endonucleases cleave the 5'-overhanging flap structure that is generated by displacement synthesis when DNA polymerase encounters the 5'-end of a downstream Okazaki fragment. The polypeptide is Flap endonuclease Xni (Shewanella piezotolerans (strain WP3 / JCM 13877)).